Here is a 314-residue protein sequence, read N- to C-terminus: Ribonuclease Z (314 aa).

The Zn(2+) site is built by His62, His64, Asp66, His67, His144, Asp215, and His273. Asp66 serves as the catalytic Proton acceptor.

Belongs to the RNase Z family. As to quaternary structure, homodimer. Zn(2+) is required as a cofactor.

It catalyses the reaction Endonucleolytic cleavage of RNA, removing extra 3' nucleotides from tRNA precursor, generating 3' termini of tRNAs. A 3'-hydroxy group is left at the tRNA terminus and a 5'-phosphoryl group is left at the trailer molecule.. Zinc phosphodiesterase, which displays some tRNA 3'-processing endonuclease activity. Probably involved in tRNA maturation, by removing a 3'-trailer from precursor tRNA. In Prochlorococcus marinus (strain NATL1A), this protein is Ribonuclease Z.